The sequence spans 347 residues: S-adenosylmethionine:tRNA ribosyltransferase-isomerase (347 aa).

The protein belongs to the QueA family. In terms of assembly, monomer.

The protein localises to the cytoplasm. It carries out the reaction 7-aminomethyl-7-carbaguanosine(34) in tRNA + S-adenosyl-L-methionine = epoxyqueuosine(34) in tRNA + adenine + L-methionine + 2 H(+). The protein operates within tRNA modification; tRNA-queuosine biosynthesis. In terms of biological role, transfers and isomerizes the ribose moiety from AdoMet to the 7-aminomethyl group of 7-deazaguanine (preQ1-tRNA) to give epoxyqueuosine (oQ-tRNA). The sequence is that of S-adenosylmethionine:tRNA ribosyltransferase-isomerase from Streptococcus thermophilus (strain CNRZ 1066).